A 161-amino-acid polypeptide reads, in one-letter code: 2-C-methyl-D-erythritol 2,4-cyclodiphosphate synthase (161 aa).

Residues D14 and H16 each contribute to the a divalent metal cation site. 4-CDP-2-C-methyl-D-erythritol 2-phosphate contacts are provided by residues 14-16 (DVH) and 40-41 (HS). H48 serves as a coordination point for a divalent metal cation. 4-CDP-2-C-methyl-D-erythritol 2-phosphate-binding positions include 62 to 64 (DLG), F142, and R145.

This sequence belongs to the IspF family. As to quaternary structure, homotrimer. A divalent metal cation is required as a cofactor.

The catalysed reaction is 4-CDP-2-C-methyl-D-erythritol 2-phosphate = 2-C-methyl-D-erythritol 2,4-cyclic diphosphate + CMP. It participates in isoprenoid biosynthesis; isopentenyl diphosphate biosynthesis via DXP pathway; isopentenyl diphosphate from 1-deoxy-D-xylulose 5-phosphate: step 4/6. In terms of biological role, involved in the biosynthesis of isopentenyl diphosphate (IPP) and dimethylallyl diphosphate (DMAPP), two major building blocks of isoprenoid compounds. Catalyzes the conversion of 4-diphosphocytidyl-2-C-methyl-D-erythritol 2-phosphate (CDP-ME2P) to 2-C-methyl-D-erythritol 2,4-cyclodiphosphate (ME-CPP) with a corresponding release of cytidine 5-monophosphate (CMP). This Acidothermus cellulolyticus (strain ATCC 43068 / DSM 8971 / 11B) protein is 2-C-methyl-D-erythritol 2,4-cyclodiphosphate synthase.